A 325-amino-acid polypeptide reads, in one-letter code: ATP phosphoribosyltransferase (325 aa).

This sequence belongs to the ATP phosphoribosyltransferase family. Long subfamily. The cofactor is Mg(2+).

The protein localises to the cytoplasm. It carries out the reaction 1-(5-phospho-beta-D-ribosyl)-ATP + diphosphate = 5-phospho-alpha-D-ribose 1-diphosphate + ATP. It participates in amino-acid biosynthesis; L-histidine biosynthesis; L-histidine from 5-phospho-alpha-D-ribose 1-diphosphate: step 1/9. With respect to regulation, feedback inhibited by histidine. Its function is as follows. Catalyzes the condensation of ATP and 5-phosphoribose 1-diphosphate to form N'-(5'-phosphoribosyl)-ATP (PR-ATP). Has a crucial role in the pathway because the rate of histidine biosynthesis seems to be controlled primarily by regulation of HisG enzymatic activity. This is ATP phosphoribosyltransferase from Nitrobacter winogradskyi (strain ATCC 25391 / DSM 10237 / CIP 104748 / NCIMB 11846 / Nb-255).